We begin with the raw amino-acid sequence, 50 residues long: U37-theraphotoxin-Cg1b (50 aa).

A signal peptide spans 1 to 19; the sequence is MRVLLIIAGLALLSVVCYT.

The protein belongs to the neurotoxin 10 (Hwtx-1) family. 67 (Jztx-67) subfamily. As to expression, expressed by the venom gland.

The protein resides in the secreted. The sequence is that of U37-theraphotoxin-Cg1b from Chilobrachys guangxiensis (Chinese earth tiger tarantula).